The following is a 405-amino-acid chain: Tryptophan synthase beta chain (405 aa).

The residue at position 98 (lysine 98) is an N6-(pyridoxal phosphate)lysine.

The protein belongs to the TrpB family. As to quaternary structure, tetramer of two alpha and two beta chains. Pyridoxal 5'-phosphate serves as cofactor.

The enzyme catalyses (1S,2R)-1-C-(indol-3-yl)glycerol 3-phosphate + L-serine = D-glyceraldehyde 3-phosphate + L-tryptophan + H2O. It participates in amino-acid biosynthesis; L-tryptophan biosynthesis; L-tryptophan from chorismate: step 5/5. Its function is as follows. The beta subunit is responsible for the synthesis of L-tryptophan from indole and L-serine. This is Tryptophan synthase beta chain from Xylella fastidiosa (strain M23).